Here is a 382-residue protein sequence, read N- to C-terminus: Proton extrusion protein PxcA (382 aa).

Helical transmembrane passes span 162-182 (VLLL…TYLI), 257-277 (AIKN…VCLM), 305-325 (IILF…SVLL), and 340-360 (FVNL…KYWI).

It belongs to the CemA family.

It localises to the cell inner membrane. Its function is as follows. Required for H(+) efflux immediately after light irradiation to form a rapid H(+) concentration gradient across the thylakoid membranes. Together with PxcL, contributes to transient H(+) uptake following dark to light transition. This Synechococcus sp. (strain CC9605) protein is Proton extrusion protein PxcA.